A 211-amino-acid chain; its full sequence is tRNA (guanine-N(7)-)-methyltransferase (211 aa).

S-adenosyl-L-methionine contacts are provided by Glu-44, Asp-69, Asp-96, and Asp-118. Residue Asp-118 is part of the active site. Lys-122 contributes to the substrate binding site. The tract at residues Arg-124–Arg-129 is interaction with RNA. Substrate-binding positions include Asp-154 and Thr-191–Glu-194.

It belongs to the class I-like SAM-binding methyltransferase superfamily. TrmB family.

It carries out the reaction guanosine(46) in tRNA + S-adenosyl-L-methionine = N(7)-methylguanosine(46) in tRNA + S-adenosyl-L-homocysteine. The protein operates within tRNA modification; N(7)-methylguanine-tRNA biosynthesis. Its function is as follows. Catalyzes the formation of N(7)-methylguanine at position 46 (m7G46) in tRNA. In Streptococcus equi subsp. equi (strain 4047), this protein is tRNA (guanine-N(7)-)-methyltransferase.